A 288-amino-acid chain; its full sequence is ATP synthase gamma chain (288 aa).

Belongs to the ATPase gamma chain family. F-type ATPases have 2 components, CF(1) - the catalytic core - and CF(0) - the membrane proton channel. CF(1) has five subunits: alpha(3), beta(3), gamma(1), delta(1), epsilon(1). CF(0) has three main subunits: a, b and c.

Its subcellular location is the cell inner membrane. Produces ATP from ADP in the presence of a proton gradient across the membrane. The gamma chain is believed to be important in regulating ATPase activity and the flow of protons through the CF(0) complex. The protein is ATP synthase gamma chain of Legionella pneumophila (strain Paris).